We begin with the raw amino-acid sequence, 252 residues long: Protein PF0476 (252 aa).

Belongs to the CinA family.

The polypeptide is Protein PF0476 (Pyrococcus furiosus (strain ATCC 43587 / DSM 3638 / JCM 8422 / Vc1)).